The sequence spans 475 residues: Threonine synthase (475 aa).

Lysine 120 carries the post-translational modification N6-(pyridoxal phosphate)lysine.

Belongs to the threonine synthase family. Pyridoxal 5'-phosphate serves as cofactor.

The catalysed reaction is O-phospho-L-homoserine + H2O = L-threonine + phosphate. It functions in the pathway amino-acid biosynthesis; L-threonine biosynthesis; L-threonine from L-aspartate: step 5/5. Catalyzes the gamma-elimination of phosphate from L-phosphohomoserine and the beta-addition of water to produce L-threonine. This is Threonine synthase (thrC) from Methylobacillus glycogenes.